We begin with the raw amino-acid sequence, 230 residues long: Ribonuclease HII (230 aa).

Residues 28-217 (FRIAGIDEAG…VKEHLPSQPD (190 aa)) enclose the RNase H type-2 domain. A divalent metal cation-binding residues include Asp-34, Glu-35, and Asp-126. Residues 211 to 230 (HLPSQPDCDTAGPSTGLFSF) are disordered.

The protein belongs to the RNase HII family. The cofactor is Mn(2+). It depends on Mg(2+) as a cofactor.

The protein localises to the cytoplasm. The catalysed reaction is Endonucleolytic cleavage to 5'-phosphomonoester.. Functionally, endonuclease that specifically degrades the RNA of RNA-DNA hybrids. This is Ribonuclease HII from Geobacter sp. (strain M21).